The sequence spans 388 residues: Sex-determination protein fem-3 (388 aa).

A run of 6 repeats spans residues 7-10 (SDDV), 110-113 (ITRF), 141-144 (ITRF), 234-237 (YHTT), 284-287 (YHTT), and 371-374 (SDDV).

As to quaternary structure, component of a complex containing fem-1, fem-2 and fem-3. Interacts with fem-1 and fem-2 (via N-terminus). Part of a E3 ubiquitin-protein ligase complex, at least composed of cul-2, elc-1, tra-1, fem-1, fem-2 and fem-3; mediates the ubiquitination and subsequent proteasomal degradation of tra-1. Interacts with tra-1. Interacts with sel-10. Interacts with tra-2.

Functionally, required for male development. In XO (male) animals, fem-3 directs male differentiation in all tissues. In XX (hermaphrodite) animals, it specifies the first 80 or so germ cells to be sperm. Negatively regulates male development when bound to tra-2. Together with fem-2 associates with the CBC(fem-1) E3 ubiquitin-protein ligase complex which mediates the ubiquitination and subsequent proteasomal degradation of tra-1. This Caenorhabditis elegans protein is Sex-determination protein fem-3 (fem-3).